The sequence spans 380 residues: Cytochrome b (380 aa).

4 helical membrane passes run 28-48 (IGSL…FLSL), 72-93 (WLVR…YAHI), 109-129 (WLVG…GYVL), and 174-194 (FYSF…VHLL). Heme b-binding residues include histidine 78 and histidine 92. The heme b site is built by histidine 178 and histidine 192. Residue histidine 197 coordinates a ubiquinone. 4 helical membrane-spanning segments follow: residues 222 to 243 (WKIL…CYIT), 285 to 305 (IGGV…PLAL), 317 to 337 (IGQL…WLGA), and 344 to 364 (YISL…LYMI).

Belongs to the cytochrome b family. As to quaternary structure, the main subunits of complex b-c1 are: cytochrome b, cytochrome c1 and the Rieske protein. Requires heme b as cofactor.

It is found in the mitochondrion inner membrane. Component of the ubiquinol-cytochrome c reductase complex (complex III or cytochrome b-c1 complex) that is part of the mitochondrial respiratory chain. The b-c1 complex mediates electron transfer from ubiquinol to cytochrome c. Contributes to the generation of a proton gradient across the mitochondrial membrane that is then used for ATP synthesis. This Cepaea nemoralis (Banded wood snail) protein is Cytochrome b (MT-CYB).